A 151-amino-acid polypeptide reads, in one-letter code: Histone H2B.1 (151 aa).

Basic and acidic residues-rich tracts occupy residues 1–28 (MAPKAEKKPAAKKPAEEEPATEKVEKAP) and 36–51 (EKRLPAGKSKEGGEGK). A disordered region spans residues 1-58 (MAPKAEKKPAAKKPAEEEPATEKVEKAPAGKKPKAEKRLPAGKSKEGGEGKKGKKKAK). 2 positions are modified to N6-acetyllysine: Lys-7 and Lys-37. Lys-147 is covalently cross-linked (Glycyl lysine isopeptide (Lys-Gly) (interchain with G-Cter in ubiquitin)).

It belongs to the histone H2B family. As to quaternary structure, the nucleosome is a histone octamer containing two molecules each of H2A, H2B, H3 and H4 assembled in one H3-H4 heterotetramer and two H2A-H2B heterodimers. The octamer wraps approximately 147 bp of DNA. Post-translationally, can be acetylated to form H2BK6ac and H2BK33ac. Monoubiquitinated to form H2BK143ub1; may give a specific tag for epigenetic transcriptional activation.

Its subcellular location is the nucleus. The protein localises to the chromosome. Its function is as follows. Core component of nucleosome. Nucleosomes wrap and compact DNA into chromatin, limiting DNA accessibility to the cellular machineries which require DNA as a template. Histones thereby play a central role in transcription regulation, DNA repair, DNA replication and chromosomal stability. DNA accessibility is regulated via a complex set of post-translational modifications of histones, also called histone code, and nucleosome remodeling. The polypeptide is Histone H2B.1 (Zea mays (Maize)).